The sequence spans 108 residues: Protein RnfH (108 aa).

The interval 86-108 (ARRRRAEKAKEEGRANKVTGGRA) is disordered.

It belongs to the UPF0125 (RnfH) family.

The chain is Protein RnfH from Pseudoalteromonas atlantica (strain T6c / ATCC BAA-1087).